The sequence spans 230 residues: Ureidoacrylate amidohydrolase RutB (230 aa).

Asp24 (proton acceptor) is an active-site residue. Lys133 is an active-site residue. Cys166 functions as the Nucleophile in the catalytic mechanism.

This sequence belongs to the isochorismatase family. RutB subfamily.

It carries out the reaction (Z)-3-ureidoacrylate + H2O + H(+) = (Z)-3-aminoacrylate + NH4(+) + CO2. It catalyses the reaction (Z)-3-ureidoacrylate + H2O = (Z)-3-aminoacrylate + carbamate + H(+). The enzyme catalyses (Z)-2-methylureidoacrylate + H2O + H(+) = (Z)-2-methylaminoacrylate + NH4(+) + CO2. Hydrolyzes ureidoacrylate to form aminoacrylate and carbamate. The carbamate hydrolyzes spontaneously, thereby releasing one of the nitrogen atoms of the pyrimidine ring as ammonia and one of its carbon atoms as CO2. This Escherichia coli O111:H- (strain 11128 / EHEC) protein is Ureidoacrylate amidohydrolase RutB.